A 583-amino-acid polypeptide reads, in one-letter code: R-linalool synthase QH5, chloroplastic (583 aa).

A chloroplast-targeting transit peptide spans 1 to 40; it reads MASISLFPYSILKQTSPLARGTAYNRIYSTKTTGITVDVA. The (2E)-geranyl diphosphate site is built by R298, D335, D339, R476, and D479. D335 and D339 together coordinate Mg(2+). The DDXXD motif motif lies at 335–339; the sequence is DDVYD. Mg(2+)-binding residues include D479, T483, and E487. Residue D492 coordinates K(+).

This sequence belongs to the terpene synthase family. Tpsb subfamily. Mg(2+) serves as cofactor. It depends on Mn(2+) as a cofactor. The cofactor is K(+). As to expression, expressed in every aerial organ except for the stem stele of mature plants. Not detected in roots.

Its subcellular location is the plastid. It localises to the chloroplast. It catalyses the reaction (2E)-geranyl diphosphate + H2O = (R)-linalool + diphosphate. It functions in the pathway secondary metabolite biosynthesis; terpenoid biosynthesis. Functionally, monoterpene synthase that catalyzes the formation of (3R)-linalool from geranyl diphosphate, but not from isopentenyl diphosphate, dimethylallyl diphosphate, chrysanthemyl diphosphate, farnesyl diphosphate, (+)-copalyl diphosphate or geranylgeranyl diphosphate. This is R-linalool synthase QH5, chloroplastic from Artemisia annua (Sweet wormwood).